Here is a 258-residue protein sequence, read N- to C-terminus: uncharacterized protein (258 aa).

Positions 40-54 (AQKTDTPLDSSSYAV) are enriched in polar residues. A disordered region spans residues 40–63 (AQKTDTPLDSSSYAVTSPEEAPNE).

This is an uncharacterized protein from Treponema pallidum (strain Nichols).